Here is a 940-residue protein sequence, read N- to C-terminus: UvrABC system protein A (940 aa).

ATP is bound at residue 31–38; sequence GLSGSGKS. A C4-type zinc finger spans residues 252-279; the sequence is CPHCGYSMQELEPRLFSFNNPAGACGTC. 2 ABC transporter domains span residues 309–586 and 606–936; these read WDQK…PDSL and RDKN…RFLK. 639–646 contributes to the ATP binding site; it reads GVSGSGKS. Residues 739–765 form a C4-type zinc finger; that stretch reads CEACQGDGVIKVEMHFLPDVYVPCDVC.

This sequence belongs to the ABC transporter superfamily. UvrA family. Forms a heterotetramer with UvrB during the search for lesions.

Its subcellular location is the cytoplasm. Its function is as follows. The UvrABC repair system catalyzes the recognition and processing of DNA lesions. UvrA is an ATPase and a DNA-binding protein. A damage recognition complex composed of 2 UvrA and 2 UvrB subunits scans DNA for abnormalities. When the presence of a lesion has been verified by UvrB, the UvrA molecules dissociate. This chain is UvrABC system protein A, found in Vibrio vulnificus (strain YJ016).